We begin with the raw amino-acid sequence, 185 residues long: N-alpha-acetyltransferase 30 (185 aa).

The N-acetyltransferase domain occupies 31–179; sequence IEYIPYQGES…DAVRLLLPLN (149 aa).

Belongs to the acetyltransferase family. MAK3 subfamily.

Its function is as follows. Probable catalytic component of a complex displaying alpha (N-terminal) acetyltransferase activity. The polypeptide is N-alpha-acetyltransferase 30 (Dictyostelium discoideum (Social amoeba)).